The following is a 347-amino-acid chain: Eukaryotic translation initiation factor 3 subunit I (347 aa).

WD repeat units lie at residues 8-49, 50-89, 146-186, 198-237, 239-278, and 295-336; these read GHER…GTYE, GHNGTVWTVDVDSTSTLLVSGSADNQMRLWEVATGKCLFT, TFSG…PESG, AHTDVISDLQMSADRTYFVTSSRDKTSKLIDSKTLQVIKT, ATETPLNSASIHPTKPFVIVGGGQDAMNVTTTSARQGRFE, and GHFG…SKLY.

This sequence belongs to the eIF-3 subunit I family. In terms of assembly, component of the eukaryotic translation initiation factor 3 (eIF-3) complex.

It is found in the cytoplasm. Its function is as follows. Component of the eukaryotic translation initiation factor 3 (eIF-3) complex, which is involved in protein synthesis of a specialized repertoire of mRNAs and, together with other initiation factors, stimulates binding of mRNA and methionyl-tRNAi to the 40S ribosome. The eIF-3 complex specifically targets and initiates translation of a subset of mRNAs involved in cell proliferation. This is Eukaryotic translation initiation factor 3 subunit I from Mycosarcoma maydis (Corn smut fungus).